The primary structure comprises 508 residues: Maturase K (508 aa).

It belongs to the intron maturase 2 family. MatK subfamily.

Its subcellular location is the plastid. It is found in the chloroplast. Its function is as follows. Usually encoded in the trnK tRNA gene intron. Probably assists in splicing its own and other chloroplast group II introns. The protein is Maturase K of Chaetosphaeridium globosum (Charophycean green alga).